The primary structure comprises 123 residues: Small ribosomal subunit protein uS12cz/uS12cy (123 aa).

The protein belongs to the universal ribosomal protein uS12 family. As to quaternary structure, part of the 30S ribosomal subunit.

Its subcellular location is the plastid. It is found in the chloroplast. Functionally, with S4 and S5 plays an important role in translational accuracy. Located at the interface of the 30S and 50S subunits. This chain is Small ribosomal subunit protein uS12cz/uS12cy (rps12-A), found in Eucalyptus globulus subsp. globulus (Tasmanian blue gum).